The chain runs to 198 residues: Recombination protein RecR (198 aa).

The segment at 57 to 72 (CSVCGHITDQDPCYIC) adopts a C4-type zinc-finger fold. The Toprim domain maps to 80 to 175 (SVICVVQDPK…KLSRIAHGLP (96 aa)).

It belongs to the RecR family.

Functionally, may play a role in DNA repair. It seems to be involved in an RecBC-independent recombinational process of DNA repair. It may act with RecF and RecO. This chain is Recombination protein RecR, found in Bacillus pumilus (strain SAFR-032).